We begin with the raw amino-acid sequence, 219 residues long: Charged multivesicular body protein 5 (219 aa).

Basic residues predominate over residues 1–10 (MNRFFGKAKP). The interval 1–21 (MNRFFGKAKPKAPPPSLTDCI) is disordered. The stretch at 26-179 (SRAESIDKKI…LGDELLADED (154 aa)) forms a coiled coil. At serine 86 the chain carries Phosphoserine. The segment at 188–219 (SAPAIPEGVPTDTKNKDGVLVDEFGLPQIPAS) is disordered.

The protein belongs to the SNF7 family. In terms of assembly, probable peripherally associated component of the endosomal sorting required for transport complex III (ESCRT-III). ESCRT-III components are thought to multimerize to form a flat lattice on the perimeter membrane of the endosome. Several assembly forms of ESCRT-III may exist that interact and act sequentially. Interacts with VTA1. Interacts with CHMP2A. Interacts with VTA1; the interaction involves soluble CHMP5. Interacts with NOD2. Interacts with BROX. In terms of processing, ISGylated. Isgylation inhibits its interaction with VTA1.

It localises to the cytoplasm. Its subcellular location is the cytosol. It is found in the endosome membrane. The protein localises to the midbody. Functionally, probable peripherally associated component of the endosomal sorting required for transport complex III (ESCRT-III) which is involved in multivesicular bodies (MVBs) formation and sorting of endosomal cargo proteins into MVBs. MVBs contain intraluminal vesicles (ILVs) that are generated by invagination and scission from the limiting membrane of the endosome and mostly are delivered to lysosomes enabling degradation of membrane proteins, such as stimulated growth factor receptors, lysosomal enzymes and lipids. The MVB pathway appears to require the sequential function of ESCRT-O, -I,-II and -III complexes. ESCRT-III proteins mostly dissociate from the invaginating membrane before the ILV is released. The ESCRT machinery also functions in topologically equivalent membrane fission events, such as the terminal stages of cytokinesis. ESCRT-III proteins are believed to mediate the necessary vesicle extrusion and/or membrane fission activities, possibly in conjunction with the AAA ATPase VPS4. The chain is Charged multivesicular body protein 5 (Chmp5) from Mus musculus (Mouse).